Here is a 301-residue protein sequence, read N- to C-terminus: Probable cyclic nucleotide phosphodiesterase RER_40650 (301 aa).

Positions 20, 22, 61, 95, 167, 205, and 207 each coordinate Fe cation. AMP-binding positions include His-22, Asp-61, and Asn-95–His-96. An AMP-binding site is contributed by His-207.

This sequence belongs to the cyclic nucleotide phosphodiesterase class-III family. It depends on Fe(2+) as a cofactor.

The chain is Probable cyclic nucleotide phosphodiesterase RER_40650 from Rhodococcus erythropolis (strain PR4 / NBRC 100887).